A 1235-amino-acid polypeptide reads, in one-letter code: DNA polymerase (1235 aa).

The DOD-type homing endonuclease domain occupies 773–887 (LLGYYISSGD…LILLLNSIGV (115 aa)).

This sequence belongs to the DNA polymerase type-B family. This protein undergoes a protein self splicing that involves a post-translational excision of the intervening region (intein) followed by peptide ligation.

It carries out the reaction DNA(n) + a 2'-deoxyribonucleoside 5'-triphosphate = DNA(n+1) + diphosphate. The polypeptide is DNA polymerase (pol) (Pyrococcus horikoshii (strain ATCC 700860 / DSM 12428 / JCM 9974 / NBRC 100139 / OT-3)).